A 108-amino-acid chain; its full sequence is DIQMTQTTSSLSASLGHRVTITCSASQDISNYLNWYQQKPDGTVKLLIYYTSRLHSGVPSRFSGSGSATDYSLTITNLQQEDXATYXCQQGNTLPYTFGGGTKLXIKR.

Residues 1–23 form a framework-1 region; that stretch reads DIQMTQTTSSLSASLGHRVTITC. A disulfide bridge connects residues cysteine 23 and cysteine 88. Positions 24 to 34 are complementarity-determining-1; the sequence is SASQDISNYLN. The tract at residues 35-49 is framework-2; the sequence is WYQQKPDGTVKLLIY. Residues 50-56 are complementarity-determining-2; the sequence is YTSRLHS. A framework-3 region spans residues 57–88; that stretch reads GVPSRFSGSGSATDYSLTITNLQQEDXATYXC. Residues 89–97 form a complementarity-determining-3 region; that stretch reads QQGNTLPYT. The interval 98–107 is framework-4; that stretch reads FGGGTKLXIK.

Its function is as follows. Anti-2-phenyl oxazolone (PHOX) Antibody. This is Ig kappa chain V-V region NQ5-89.4 from Mus musculus (Mouse).